Reading from the N-terminus, the 315-residue chain is 4-diphosphocytidyl-2-C-methyl-D-erythritol kinase (315 aa).

The active site involves K26. ATP is bound at residue 111–121 (PLAGGLAGGSA). D153 is an active-site residue.

It belongs to the GHMP kinase family. IspE subfamily.

It catalyses the reaction 4-CDP-2-C-methyl-D-erythritol + ATP = 4-CDP-2-C-methyl-D-erythritol 2-phosphate + ADP + H(+). The protein operates within isoprenoid biosynthesis; isopentenyl diphosphate biosynthesis via DXP pathway; isopentenyl diphosphate from 1-deoxy-D-xylulose 5-phosphate: step 3/6. Functionally, catalyzes the phosphorylation of the position 2 hydroxy group of 4-diphosphocytidyl-2C-methyl-D-erythritol. The polypeptide is 4-diphosphocytidyl-2-C-methyl-D-erythritol kinase (Salinispora tropica (strain ATCC BAA-916 / DSM 44818 / JCM 13857 / NBRC 105044 / CNB-440)).